A 124-amino-acid polypeptide reads, in one-letter code: Small ribosomal subunit protein uS13 (124 aa).

Residues 92–117 show a composition bias toward basic residues; it reads RRGLPVRGQRTKSNARTRKGPRKTVA. The disordered stretch occupies residues 92 to 124; sequence RRGLPVRGQRTKSNARTRKGPRKTVANKKIESK.

The protein belongs to the universal ribosomal protein uS13 family. As to quaternary structure, part of the 30S ribosomal subunit. Forms a loose heterodimer with protein S19. Forms two bridges to the 50S subunit in the 70S ribosome.

Located at the top of the head of the 30S subunit, it contacts several helices of the 16S rRNA. In the 70S ribosome it contacts the 23S rRNA (bridge B1a) and protein L5 of the 50S subunit (bridge B1b), connecting the 2 subunits; these bridges are implicated in subunit movement. Contacts the tRNAs in the A and P-sites. In Mycoplasmoides gallisepticum (strain R(low / passage 15 / clone 2)) (Mycoplasma gallisepticum), this protein is Small ribosomal subunit protein uS13.